A 299-amino-acid polypeptide reads, in one-letter code: tRNA dimethylallyltransferase (299 aa).

Position 11–18 (11–18 (GPTAVGKT)) interacts with ATP. 13 to 18 (TAVGKT) contributes to the substrate binding site. The tract at residues 36-39 (DSQQ) is interaction with substrate tRNA.

The protein belongs to the IPP transferase family. In terms of assembly, monomer. The cofactor is Mg(2+).

The enzyme catalyses adenosine(37) in tRNA + dimethylallyl diphosphate = N(6)-dimethylallyladenosine(37) in tRNA + diphosphate. Functionally, catalyzes the transfer of a dimethylallyl group onto the adenine at position 37 in tRNAs that read codons beginning with uridine, leading to the formation of N6-(dimethylallyl)adenosine (i(6)A). This is tRNA dimethylallyltransferase from Streptococcus pyogenes serotype M12 (strain MGAS2096).